We begin with the raw amino-acid sequence, 383 residues long: 8-amino-7-oxononanoate synthase (383 aa).

Residues Arg27 and Arg34 each contribute to the substrate site. Pyridoxal 5'-phosphate is bound at residue 114-115; the sequence is GY. Residue His139 participates in substrate binding. Residues Ser187, 212–215, and 232–235 each bind pyridoxal 5'-phosphate; these read DDAH and TLSK. Lys235 bears the N6-(pyridoxal phosphate)lysine mark. Thr344 serves as a coordination point for substrate.

This sequence belongs to the class-II pyridoxal-phosphate-dependent aminotransferase family. BioF subfamily. As to quaternary structure, homodimer. The cofactor is pyridoxal 5'-phosphate.

It carries out the reaction 6-carboxyhexanoyl-[ACP] + L-alanine + H(+) = (8S)-8-amino-7-oxononanoate + holo-[ACP] + CO2. The protein operates within cofactor biosynthesis; biotin biosynthesis. In terms of biological role, catalyzes the decarboxylative condensation of pimeloyl-[acyl-carrier protein] and L-alanine to produce 8-amino-7-oxononanoate (AON), [acyl-carrier protein], and carbon dioxide. This Methylorubrum extorquens (strain CM4 / NCIMB 13688) (Methylobacterium extorquens) protein is 8-amino-7-oxononanoate synthase.